The sequence spans 953 residues: TPR repeat-containing protein ZIP4 (953 aa).

A TPR 1 repeat occupies 129–162 (ASFFHRSGLAWLDLGRVDLASACFEKATPLVSAA). Residues 248 to 269 (AASPSSSSPRTPPYGGATPKTP) form a disordered region. TPR repeat units lie at residues 432 to 465 (HALLWNCGTEHFRAKNYDTSADLIERSMLYVSRD) and 473 to 506 (ADCFRVLSICHIALQHLDRALEFVNEAYKVEPNI). The interval 924-953 (RVSGDEPDECSQEEAPKASISGSMSQPVLV) is disordered. The segment covering 943-953 (ISGSMSQPVLV) has biased composition (polar residues).

It is found in the nucleus. It localises to the chromosome. Required for crossover formation, complete synapsis of homologous chromosomes and bivalent formation during meiosis. Is specific to recombination events resulting in interference-sensitive crossovers (class I meiotic crossover) and works cooperatively with MER3 to promote crossovers. In Oryza sativa subsp. indica (Rice), this protein is TPR repeat-containing protein ZIP4.